The sequence spans 176 residues: Translation initiation factor IF-3 (176 aa).

It belongs to the IF-3 family. As to quaternary structure, monomer.

It localises to the cytoplasm. Functionally, IF-3 binds to the 30S ribosomal subunit and shifts the equilibrium between 70S ribosomes and their 50S and 30S subunits in favor of the free subunits, thus enhancing the availability of 30S subunits on which protein synthesis initiation begins. This chain is Translation initiation factor IF-3, found in Nitratidesulfovibrio vulgaris (strain ATCC 29579 / DSM 644 / CCUG 34227 / NCIMB 8303 / VKM B-1760 / Hildenborough) (Desulfovibrio vulgaris).